Consider the following 189-residue polypeptide: Interferon alpha-C (189 aa).

An N-terminal signal peptide occupies residues 1 to 23 (MAPAWSFRLALLLLSCNAICSLG). Cystine bridges form between Cys24–Cys122 and Cys52–Cys162.

It belongs to the alpha/beta interferon family.

The protein localises to the secreted. Its function is as follows. Produced by macrophages, IFN-alpha have antiviral activities. Interferon stimulates the production of two enzymes: a protein kinase and an oligoadenylate synthetase. The chain is Interferon alpha-C (IFNAC) from Bos taurus (Bovine).